Consider the following 158-residue polypeptide: Endoribonuclease YbeY (158 aa).

The Zn(2+) site is built by His-118, His-122, and His-128.

This sequence belongs to the endoribonuclease YbeY family. It depends on Zn(2+) as a cofactor.

It localises to the cytoplasm. Functionally, single strand-specific metallo-endoribonuclease involved in late-stage 70S ribosome quality control and in maturation of the 3' terminus of the 16S rRNA. This chain is Endoribonuclease YbeY, found in Haemophilus ducreyi (strain 35000HP / ATCC 700724).